The sequence spans 98 residues: Small ribosomal subunit protein uS17 (98 aa).

This sequence belongs to the universal ribosomal protein uS17 family. In terms of assembly, part of the 30S ribosomal subunit.

In terms of biological role, one of the primary rRNA binding proteins, it binds specifically to the 5'-end of 16S ribosomal RNA. This is Small ribosomal subunit protein uS17 from Synechococcus sp. (strain CC9605).